Consider the following 649-residue polypeptide: ABC transporter G family member 5 (649 aa).

The 243-residue stretch at 42 to 284 (VKTEEESLKL…LRSNGLHPPL (243 aa)) folds into the ABC transporter domain. 80–87 (GPSGAGKS) is an ATP binding site. The tract at residues 308 to 336 (SRRAAHVLTPQTTLQEKRSEDSQGESKSG) is disordered. Positions 371–581 (EETMILTHRF…PFEGFLINEF (211 aa)) constitute an ABC transmembrane type-2 domain. Transmembrane regions (helical) follow at residues 390-410 (LFAC…LIFH), 425-445 (LFAF…PIFL), 474-494 (LPFL…LVGL), 506-526 (LLIW…SALV), 529-549 (FIVG…FSGY), and 617-637 (VVIM…ILRC).

This sequence belongs to the ABC transporter superfamily. ABCG family. Eye pigment precursor importer (TC 3.A.1.204) subfamily.

The protein resides in the membrane. In Arabidopsis thaliana (Mouse-ear cress), this protein is ABC transporter G family member 5 (ABCG5).